Reading from the N-terminus, the 536-residue chain is L-aspartate oxidase 2 (536 aa).

FAD is bound by residues 22 to 25 and 51 to 58; these read EGLA and SSYWAQGG. Arg284 acts as the Proton donor/acceptor in catalysis. Residues Glu369 and 385 to 386 contribute to the FAD site; that span reads SL.

It belongs to the FAD-dependent oxidoreductase 2 family. NadB subfamily. The cofactor is FAD.

It localises to the cytoplasm. It carries out the reaction L-aspartate + O2 = iminosuccinate + H2O2. It participates in cofactor biosynthesis; NAD(+) biosynthesis; iminoaspartate from L-aspartate (oxidase route): step 1/1. Functionally, catalyzes the oxidation of L-aspartate to iminoaspartate, the first step in the de novo biosynthesis of NAD(+). The protein is L-aspartate oxidase 2 (nadB2) of Ralstonia nicotianae (strain ATCC BAA-1114 / GMI1000) (Ralstonia solanacearum).